The chain runs to 60 residues: L-amino-acid oxidase (60 aa).

An FAD-binding site is contributed by 1–4 (GPMR). R4 lines the substrate pocket.

This sequence belongs to the flavin monoamine oxidase family. FIG1 subfamily. Homodimer; non-covalently linked. FAD serves as cofactor. In terms of processing, contains 2 disulfide bonds. N-glycosylated. In terms of tissue distribution, expressed by the venom gland.

Its subcellular location is the secreted. The enzyme catalyses an L-alpha-amino acid + O2 + H2O = a 2-oxocarboxylate + H2O2 + NH4(+). Functionally, catalyzes an oxidative deamination of predominantly hydrophobic and aromatic L-amino acids, thus producing hydrogen peroxide that may contribute to the diverse toxic effects of this enzyme. Exhibits diverse biological activities, such as hemorrhage, hemolysis, edema, apoptosis of vascular endothelial cells or tumor cell lines, antibacterial and antiparasitic activities, as well as regulation of platelet aggregation. Effects of snake L-amino oxidases on platelets are controversial, since they either induce aggregation or inhibit agonist-induced aggregation. These different effects are probably due to different experimental conditions. This is L-amino-acid oxidase from Bitis gabonica (Gaboon adder).